The chain runs to 243 residues: Nuclear ubiquitous casein and cyclin-dependent kinase substrate 1 (243 aa).

The tract at residues 1-243 (MSRPVRNRKV…SEDDAQSGED (243 aa)) is disordered. The residue at position 13 (Y13) is a Phosphotyrosine. Phosphoserine occurs at positions 14 and 19. Position 26 is a phosphotyrosine (Y26). The segment covering 35-51 (KKIRSSPREAKNKRRSG) has biased composition (basic residues). A phosphoserine mark is found at S54, S58, S61, S73, S75, and S79. The segment covering 64–77 (KDVKTKKDDSHSAE) has biased composition (basic and acidic residues). Over residues 91–100 (QQRQAASKAA) the composition is skewed to low complexity. The segment covering 111 to 124 (VGSEEEQEEEDEAP) has biased composition (acidic residues). Phosphoserine is present on residues S113, S130, S132, and S144. A compositionally biased stretch (acidic residues) spans 132-145 (SDEDFLVEDDDDSD). Basic residues predominate over residues 149–174 (SKKKNKKMVKKSKPERKEKKMPKPRL). A Phosphothreonine modification is found at T179. S181 bears the Phosphoserine mark. Residues 197-206 (ASKEKTPSPK) are compositionally biased toward basic and acidic residues. Residue T202 is modified to Phosphothreonine. Phosphoserine occurs at positions 204, 214, 223, 229, 234, and 240. The segment covering 232–243 (EGSEDDAQSGED) has biased composition (acidic residues).

In terms of assembly, does not interact with RAD51. Post-translationally, phosphorylated in an ATM-dependent manner in response to DNA damage. Phosphorylated by CDK1 and casein kinase.

It is found in the nucleus. Its subcellular location is the chromosome. Chromatin-associated protein involved in DNA repair by promoting homologous recombination (HR). Binds double-stranded DNA (dsDNA) and secondary DNA structures, such as D-loop structures, but with less affinity than RAD51AP1. This Bos taurus (Bovine) protein is Nuclear ubiquitous casein and cyclin-dependent kinase substrate 1 (NUCKS1).